A 137-amino-acid chain; its full sequence is Large ribosomal subunit protein uL16 (137 aa).

Belongs to the universal ribosomal protein uL16 family. Part of the 50S ribosomal subunit.

Its function is as follows. Binds 23S rRNA and is also seen to make contacts with the A and possibly P site tRNAs. The protein is Large ribosomal subunit protein uL16 of Allorhizobium ampelinum (strain ATCC BAA-846 / DSM 112012 / S4) (Agrobacterium vitis (strain S4)).